Here is a 629-residue protein sequence, read N- to C-terminus: tRNA uridine 5-carboxymethylaminomethyl modification enzyme MnmG (629 aa).

Residue Gly13–Gly18 coordinates FAD. Gly273 to Phe287 contributes to the NAD(+) binding site.

The protein belongs to the MnmG family. As to quaternary structure, homodimer. Heterotetramer of two MnmE and two MnmG subunits. The cofactor is FAD.

It is found in the cytoplasm. NAD-binding protein involved in the addition of a carboxymethylaminomethyl (cmnm) group at the wobble position (U34) of certain tRNAs, forming tRNA-cmnm(5)s(2)U34. The protein is tRNA uridine 5-carboxymethylaminomethyl modification enzyme MnmG of Shewanella baltica (strain OS155 / ATCC BAA-1091).